Here is a 473-residue protein sequence, read N- to C-terminus: UDP-N-acetylmuramate--L-alanine ligase (473 aa).

123–129 (GSHGKTS) provides a ligand contact to ATP.

The protein belongs to the MurCDEF family.

Its subcellular location is the cytoplasm. The enzyme catalyses UDP-N-acetyl-alpha-D-muramate + L-alanine + ATP = UDP-N-acetyl-alpha-D-muramoyl-L-alanine + ADP + phosphate + H(+). Its pathway is cell wall biogenesis; peptidoglycan biosynthesis. Functionally, cell wall formation. The protein is UDP-N-acetylmuramate--L-alanine ligase of Prochlorococcus marinus subsp. pastoris (strain CCMP1986 / NIES-2087 / MED4).